Consider the following 355-residue polypeptide: Phenylalanine--tRNA ligase alpha subunit (355 aa).

E273 contacts Mg(2+).

The protein belongs to the class-II aminoacyl-tRNA synthetase family. Phe-tRNA synthetase alpha subunit type 1 subfamily. In terms of assembly, tetramer of two alpha and two beta subunits. It depends on Mg(2+) as a cofactor.

The protein resides in the cytoplasm. It catalyses the reaction tRNA(Phe) + L-phenylalanine + ATP = L-phenylalanyl-tRNA(Phe) + AMP + diphosphate + H(+). The chain is Phenylalanine--tRNA ligase alpha subunit from Bifidobacterium longum subsp. infantis (strain ATCC 15697 / DSM 20088 / JCM 1222 / NCTC 11817 / S12).